Here is a 105-residue protein sequence, read N- to C-terminus: Large ribosomal subunit protein eL30 (105 aa).

It belongs to the eukaryotic ribosomal protein eL30 family.

The chain is Large ribosomal subunit protein eL30 (RPL30) from Candida glabrata (strain ATCC 2001 / BCRC 20586 / JCM 3761 / NBRC 0622 / NRRL Y-65 / CBS 138) (Yeast).